The chain runs to 884 residues: Alanine--tRNA ligase (884 aa).

Positions 572, 576, 673, and 677 each coordinate Zn(2+).

Belongs to the class-II aminoacyl-tRNA synthetase family. Zn(2+) serves as cofactor.

It localises to the cytoplasm. The enzyme catalyses tRNA(Ala) + L-alanine + ATP = L-alanyl-tRNA(Ala) + AMP + diphosphate. Its function is as follows. Catalyzes the attachment of alanine to tRNA(Ala) in a two-step reaction: alanine is first activated by ATP to form Ala-AMP and then transferred to the acceptor end of tRNA(Ala). Also edits incorrectly charged Ser-tRNA(Ala) and Gly-tRNA(Ala) via its editing domain. The sequence is that of Alanine--tRNA ligase from Xylella fastidiosa (strain 9a5c).